Here is a 233-residue protein sequence, read N- to C-terminus: MPLHRTRIKLCGLTQPADVDHAVAIGADAIGLVFYPPSPRYVAIERAAELAHRAGPFVTVTGLFVNASADDVARVLDQVPLTLLQFHGDEPAELCAEIAGKVGLPWLRALRVQPGADLVEFADRFATAQGLLLDAFVEGYGGGGHVFDWTLIPPQWLPQSPSLPTTSAAPRLVLSGGLSAQNVAGAIERVRPYAVDVSSGIEAARGVKDHARMTAFVRAVREADAALGASVQA.

Belongs to the TrpF family.

The enzyme catalyses N-(5-phospho-beta-D-ribosyl)anthranilate = 1-(2-carboxyphenylamino)-1-deoxy-D-ribulose 5-phosphate. It functions in the pathway amino-acid biosynthesis; L-tryptophan biosynthesis; L-tryptophan from chorismate: step 3/5. The protein is N-(5'-phosphoribosyl)anthranilate isomerase of Ralstonia pickettii (strain 12J).